Reading from the N-terminus, the 1197-residue chain is DNA-directed RNA polymerase subunit beta (1197 aa).

The segment covering 581–597 (QANSPLNDDGSFTNPTV) has biased composition (polar residues). Disordered regions lie at residues 581–603 (QANS…RHGD) and 1172–1197 (EKPD…EENV).

The protein belongs to the RNA polymerase beta chain family. In terms of assembly, the RNAP catalytic core consists of 2 alpha, 1 beta, 1 beta' and 1 omega subunit. When a sigma factor is associated with the core the holoenzyme is formed, which can initiate transcription.

It carries out the reaction RNA(n) + a ribonucleoside 5'-triphosphate = RNA(n+1) + diphosphate. DNA-dependent RNA polymerase catalyzes the transcription of DNA into RNA using the four ribonucleoside triphosphates as substrates. In Oenococcus oeni (strain ATCC BAA-331 / PSU-1), this protein is DNA-directed RNA polymerase subunit beta.